The chain runs to 227 residues: Cytochrome c oxidase subunit 2 (227 aa).

Over 1–14 (MAYPHQLGFQDATS) the chain is Mitochondrial intermembrane. A helical transmembrane segment spans residues 15–45 (PIMEELLSFHDHTLMIVFLISSLVLYLISLM). Residues 46–59 (LTTKLTHTSTMDAQ) lie on the Mitochondrial matrix side of the membrane. The helical transmembrane segment at 60 to 87 (EVETVWTILPAIILIMIALPSLRILYMM) threads the bilayer. The Mitochondrial intermembrane portion of the chain corresponds to 88–227 (DEINNPLLTV…SFENWTTSMT (140 aa)). Cu cation-binding residues include H161, C196, E198, C200, H204, and M207. Mg(2+) is bound at residue E198.

It belongs to the cytochrome c oxidase subunit 2 family. As to quaternary structure, component of the cytochrome c oxidase (complex IV, CIV), a multisubunit enzyme composed of 14 subunits. The complex is composed of a catalytic core of 3 subunits MT-CO1, MT-CO2 and MT-CO3, encoded in the mitochondrial DNA, and 11 supernumerary subunits COX4I, COX5A, COX5B, COX6A, COX6B, COX6C, COX7A, COX7B, COX7C, COX8 and NDUFA4, which are encoded in the nuclear genome. The complex exists as a monomer or a dimer and forms supercomplexes (SCs) in the inner mitochondrial membrane with NADH-ubiquinone oxidoreductase (complex I, CI) and ubiquinol-cytochrome c oxidoreductase (cytochrome b-c1 complex, complex III, CIII), resulting in different assemblies (supercomplex SCI(1)III(2)IV(1) and megacomplex MCI(2)III(2)IV(2)). Found in a complex with TMEM177, COA6, COX18, COX20, SCO1 and SCO2. Interacts with TMEM177 in a COX20-dependent manner. Interacts with COX20. Interacts with COX16. Cu cation serves as cofactor.

It localises to the mitochondrion inner membrane. It carries out the reaction 4 Fe(II)-[cytochrome c] + O2 + 8 H(+)(in) = 4 Fe(III)-[cytochrome c] + 2 H2O + 4 H(+)(out). Functionally, component of the cytochrome c oxidase, the last enzyme in the mitochondrial electron transport chain which drives oxidative phosphorylation. The respiratory chain contains 3 multisubunit complexes succinate dehydrogenase (complex II, CII), ubiquinol-cytochrome c oxidoreductase (cytochrome b-c1 complex, complex III, CIII) and cytochrome c oxidase (complex IV, CIV), that cooperate to transfer electrons derived from NADH and succinate to molecular oxygen, creating an electrochemical gradient over the inner membrane that drives transmembrane transport and the ATP synthase. Cytochrome c oxidase is the component of the respiratory chain that catalyzes the reduction of oxygen to water. Electrons originating from reduced cytochrome c in the intermembrane space (IMS) are transferred via the dinuclear copper A center (CU(A)) of subunit 2 and heme A of subunit 1 to the active site in subunit 1, a binuclear center (BNC) formed by heme A3 and copper B (CU(B)). The BNC reduces molecular oxygen to 2 water molecules using 4 electrons from cytochrome c in the IMS and 4 protons from the mitochondrial matrix. In Georychus capensis (Cape mole rat), this protein is Cytochrome c oxidase subunit 2 (MT-CO2).